The primary structure comprises 302 residues: 3-methyl-2-oxobutanoate hydroxymethyltransferase 1 (302 aa).

Residues Asp75 and Asp118 each contribute to the Mg(2+) site. 3-methyl-2-oxobutanoate contacts are provided by residues 75–76, Asp118, and Lys147; that span reads DS. Glu149 contacts Mg(2+). The Proton acceptor role is filled by Glu217.

This sequence belongs to the PanB family. As to quaternary structure, homodecamer; pentamer of dimers. Requires Mg(2+) as cofactor.

Its subcellular location is the cytoplasm. It carries out the reaction 3-methyl-2-oxobutanoate + (6R)-5,10-methylene-5,6,7,8-tetrahydrofolate + H2O = 2-dehydropantoate + (6S)-5,6,7,8-tetrahydrofolate. It participates in cofactor biosynthesis; (R)-pantothenate biosynthesis; (R)-pantoate from 3-methyl-2-oxobutanoate: step 1/2. Its function is as follows. Catalyzes the reversible reaction in which hydroxymethyl group from 5,10-methylenetetrahydrofolate is transferred onto alpha-ketoisovalerate to form ketopantoate. The sequence is that of 3-methyl-2-oxobutanoate hydroxymethyltransferase 1 from Zymomonas mobilis subsp. mobilis (strain ATCC 31821 / ZM4 / CP4).